The following is a 222-amino-acid chain: Type II restriction enzyme MjaI (222 aa).

The enzyme catalyses Endonucleolytic cleavage of DNA to give specific double-stranded fragments with terminal 5'-phosphates.. Its function is as follows. A P subtype restriction enzyme that recognizes the double-stranded sequence 5'-CTAG-3'; the cleavage site is unknown. This chain is Type II restriction enzyme MjaI (mjaIR), found in Methanocaldococcus jannaschii (strain ATCC 43067 / DSM 2661 / JAL-1 / JCM 10045 / NBRC 100440) (Methanococcus jannaschii).